The sequence spans 712 residues: 3',5'-cyclic-AMP phosphodiesterase 4C (712 aa).

Disordered regions lie at residues 1 to 31 (MENLGVGEGAEACSRLSRSRGRHSMTRAPKH) and 45 to 64 (RFYSDPDKSAGCRERDLSPR). The span at 17 to 31 (SRSRGRHSMTRAPKH) shows a compositional bias: basic residues. Over residues 48–64 (SDPDKSAGCRERDLSPR) the composition is skewed to basic and acidic residues. Position 73 is a phosphoserine (serine 73). The disordered stretch occupies residues 181 to 200 (AKQGPVGNPSSSNQLPPAED). Positions 312 to 641 (VQTDQEEQLA…EWYQSKIPRS (330 aa)) constitute a PDEase domain. Catalysis depends on histidine 388, which acts as the Proton donor. Position 388 (histidine 388) interacts with 3',5'-cyclic AMP. 2 residues coordinate AMP: histidine 388 and histidine 392. Zn(2+) contacts are provided by histidine 392, histidine 428, aspartate 429, and aspartate 546. 4 residues coordinate AMP: aspartate 429, aspartate 546, glutamine 597, and phenylalanine 600. Aspartate 429 contributes to the Mg(2+) binding site. A Mn(2+)-binding site is contributed by aspartate 429. Residues glutamine 597 and phenylalanine 600 each coordinate 3',5'-cyclic AMP. Disordered stretches follow at residues 636-655 (SKIPRSPSDLTNPERDGPDR) and 664-712 (EAEE…NQRT). Serine 641 is subject to Phosphoserine. The segment covering 664–678 (EAEEEDEEEEEEGEE) has biased composition (acidic residues).

It belongs to the cyclic nucleotide phosphodiesterase family. PDE4 subfamily. As to quaternary structure, part of a complex containing AKAP5, ADCY5, ADCY6 and PKD2. Zn(2+) serves as cofactor. The cofactor is Mg(2+). Requires Mn(2+) as cofactor. In terms of tissue distribution, expressed in various tissues but not in cells of the immune system.

Its subcellular location is the cell projection. The protein resides in the cilium. The enzyme catalyses 3',5'-cyclic AMP + H2O = AMP + H(+). It participates in purine metabolism; 3',5'-cyclic AMP degradation; AMP from 3',5'-cyclic AMP: step 1/1. Its activity is regulated as follows. Inhibited by rolipram. In terms of biological role, hydrolyzes the second messenger cAMP, which is a key regulator of many important physiological processes. This chain is 3',5'-cyclic-AMP phosphodiesterase 4C, found in Homo sapiens (Human).